Reading from the N-terminus, the 429-residue chain is Forkhead box protein A1-A (429 aa).

The fork-head DNA-binding region spans 159–253 (KPPYSYISLI…ENGCYLRRQK (95 aa)). Basic and acidic residues predominate over residues 258-274 (EKTQGGKGNQDGRKDHS). The tract at residues 258–341 (EKTQGGKGNQ…HSTHSLAHES (84 aa)) is disordered. The segment covering 287–304 (SSQMDSSSSMSNPSSSPQ) has biased composition (low complexity). Residues 325–336 (PLSSHQNHSTHS) are compositionally biased toward polar residues.

In terms of tissue distribution, at neurula stage, expressed in the notochord but not in the neural floor plate. During tailbud stages, expressed in the neural floor plate. At stage 35, expressed in the rhombencephalon, mesencephalon, pharyngeal pouches, foregut and pronephros. At stage 44, expressed in a region of the gut on the right hand side of the embryo. Expressed in the adult lung and liver.

It is found in the nucleus. Functionally, probable transcription factor. The chain is Forkhead box protein A1-A (foxa1-a) from Xenopus laevis (African clawed frog).